We begin with the raw amino-acid sequence, 315 residues long: Methionyl-tRNA formyltransferase (315 aa).

109–112 (SLLP) is a binding site for (6S)-5,6,7,8-tetrahydrofolate.

Belongs to the Fmt family.

The catalysed reaction is L-methionyl-tRNA(fMet) + (6R)-10-formyltetrahydrofolate = N-formyl-L-methionyl-tRNA(fMet) + (6S)-5,6,7,8-tetrahydrofolate + H(+). Its function is as follows. Attaches a formyl group to the free amino group of methionyl-tRNA(fMet). The formyl group appears to play a dual role in the initiator identity of N-formylmethionyl-tRNA by promoting its recognition by IF2 and preventing the misappropriation of this tRNA by the elongation apparatus. In Lachnospira eligens (strain ATCC 27750 / DSM 3376 / VPI C15-48 / C15-B4) (Eubacterium eligens), this protein is Methionyl-tRNA formyltransferase.